The following is a 156-amino-acid chain: Deoxyuridine 5'-triphosphate nucleotidohydrolase (156 aa).

Substrate-binding positions include 74 to 76, N87, 91 to 93, and K101; these read RSG and TID.

The protein belongs to the dUTPase family. The cofactor is Mg(2+).

It catalyses the reaction dUTP + H2O = dUMP + diphosphate + H(+). The protein operates within pyrimidine metabolism; dUMP biosynthesis; dUMP from dCTP (dUTP route): step 2/2. Functionally, this enzyme is involved in nucleotide metabolism: it produces dUMP, the immediate precursor of thymidine nucleotides and it decreases the intracellular concentration of dUTP so that uracil cannot be incorporated into DNA. The chain is Deoxyuridine 5'-triphosphate nucleotidohydrolase from Wolbachia sp. subsp. Brugia malayi (strain TRS).